Here is a 237-residue protein sequence, read N- to C-terminus: Ubiquinone biosynthesis O-methyltransferase (237 aa).

Residues Arg-39, Gly-59, Asp-80, and Met-124 each contribute to the S-adenosyl-L-methionine site.

Belongs to the methyltransferase superfamily. UbiG/COQ3 family.

The enzyme catalyses a 3-demethylubiquinol + S-adenosyl-L-methionine = a ubiquinol + S-adenosyl-L-homocysteine + H(+). The catalysed reaction is a 3-(all-trans-polyprenyl)benzene-1,2-diol + S-adenosyl-L-methionine = a 2-methoxy-6-(all-trans-polyprenyl)phenol + S-adenosyl-L-homocysteine + H(+). It functions in the pathway cofactor biosynthesis; ubiquinone biosynthesis. Functionally, O-methyltransferase that catalyzes the 2 O-methylation steps in the ubiquinone biosynthetic pathway. The sequence is that of Ubiquinone biosynthesis O-methyltransferase from Vibrio atlanticus (strain LGP32) (Vibrio splendidus (strain Mel32)).